The following is a 619-amino-acid chain: Magnesium-chelatase 67 kDa subunit (619 aa).

Residue 33–40 (STVGSGKS) participates in ATP binding. The tract at residues 273–321 (TRMPEREPSEEEMQQEEPPPPEEQPEQEGEDENAPPDETDSDADEEQEE) is disordered. A compositionally biased stretch (acidic residues) spans 280 to 321 (PSEEEMQQEEPPPPEEQPEQEGEDENAPPDETDSDADEEQEE). The VWFA domain maps to 431 to 619 (LFIFMVDASG…AEQIVEAALS (189 aa)).

It belongs to the Mg-chelatase subunits D/I family.

It carries out the reaction protoporphyrin IX + Mg(2+) + ATP + H2O = Mg-protoporphyrin IX + ADP + phosphate + 3 H(+). It functions in the pathway porphyrin-containing compound metabolism; bacteriochlorophyll biosynthesis. Functionally, involved in bacteriochlorophyll biosynthesis; introduces a magnesium ion into protoporphyrin IX to yield Mg-protoporphyrin IX. The protein is Magnesium-chelatase 67 kDa subunit (bchD) of Chlorobaculum parvum (strain DSM 263 / NCIMB 8327) (Chlorobium vibrioforme subsp. thiosulfatophilum).